The sequence spans 50 residues: Large ribosomal subunit protein bL33B (50 aa).

The protein belongs to the bacterial ribosomal protein bL33 family.

This chain is Large ribosomal subunit protein bL33B, found in Ligilactobacillus salivarius (strain UCC118) (Lactobacillus salivarius).